A 517-amino-acid polypeptide reads, in one-letter code: FAD-dependent monooxygenase FUP4 (517 aa).

The signal sequence occupies residues 1–19 (MRQSSTLTWTSVLLAPLAA). The region spanning 75–246 (QALRPACLVH…TRFDLDLYDQ (172 aa)) is the FAD-binding PCMH-type domain. Histidine 112 is modified (pros-8alpha-FAD histidine). Asparagine 163, asparagine 208, and asparagine 346 each carry an N-linked (GlcNAc...) asparagine glycan.

It belongs to the oxygen-dependent FAD-linked oxidoreductase family. The cofactor is FAD.

Its pathway is secondary metabolite biosynthesis; terpenoid biosynthesis. Its function is as follows. FAD-dependent monooxygenase; part of the gene cluster that mediates the biosynthesis of the mycotoxin fusaproliferin (FUP) that belongs to the class of bicyclic sesterterpenoids. FUP4 catalyzes the oxidation of the hydroxy group at the C-16 position of preterpestacin III to a keto group, leading to the formation of (-)-terpestacin. The product of FUP1, preterpestacin I, might also serve as a substrate of FUP4 to yield oxo-preterpestacin I. The FUP biosynthetic pathway starts with the enzyme encoded by FUP1 that combines a C-terminal prenyltransferase domain responsible for the synthesis of geranylgeranyl diphosphate with the N-terminal terpene cyclase domain, to yield preterpestacin I. Preterpestacin I is then decorated by oxygenation steps that are catalyzed by two cytochrome P450 monooxygenases. First, FUP2 introduces a hydroxyl group at the C-24 position resulting in the formation of preterpestacin IIa. The second P450 monooxygenase catalyzes the hydroxylation at C-16 and C-17 of preterpestacin IIa, producing preterpestacin III. Subsequently, the FAD-dependent oxidoreductase FUP4 catalyzes the oxidation of the hydroxy group at the C-16 position to a keto group, leading to the formation of (-)-terpestacin, which is the immediate precursor of FUP. The final step in the proposed biosynthetic pathway is the addition of an acetyl group at the C-24 position of terpestacin, which is catalyzed by the acetyltransferase FUP5. This is FAD-dependent monooxygenase FUP4 from Fusarium proliferatum (strain ET1) (Orchid endophyte fungus).